A 173-amino-acid polypeptide reads, in one-letter code: MPVVTAVGRRRGFAMPWVSTARSGAVMLANYSAGVCGRVSSPGLNVRKMCLKANTPGAVTWLDTPKRFLSTQTASRCMAVNSSDVVTGRIDPQVLHTPLNTDVDGYAHAMHSSINSGPLEYLPATFSVFPALGDVGDLGGGVGAATYALDRLSNMRSGACVGGGESPWRSLMT.

Positions 1–25 are cleaved as a signal peptide; that stretch reads MPVVTAVGRRRGFAMPWVSTARSGA.

This is an uncharacterized protein from Mycobacterium bovis (strain ATCC BAA-935 / AF2122/97).